The chain runs to 336 residues: O-methyltransferase 2 (336 aa).

The S-adenosyl-L-methionine site is built by G170, D198, N221, F222, and K237. H241 acts as the Proton acceptor in catalysis.

The protein belongs to the class I-like SAM-binding methyltransferase superfamily. Cation-independent O-methyltransferase family. COMT subfamily.

The catalysed reaction is (3,5-dichloro-2,4,6-trihydroxyphenyl)hexan-1-one + S-adenosyl-L-methionine = 1-(3,5-dichloro-2,6-dihydroxy-4-methoxyphenyl)hexan-1-one + S-adenosyl-L-homocysteine + H(+). The chain is O-methyltransferase 2 (omt2) from Dictyostelium discoideum (Social amoeba).